The chain runs to 1338 residues: Thioester-containing protein 1 allele R1 (1338 aa).

The first 21 residues, Met1–Gly21, serve as a signal peptide directing secretion. N-linked (GlcNAc...) asparagine glycans are attached at residues Asn68, Asn199, Asn242, Asn312, and Asn481. A may contain the cleavage site region spans residues Glu580–Gly609. Residues Asn637, Asn728, and Asn813 are each glycosylated (N-linked (GlcNAc...) asparagine). The isoglutamyl cysteine thioester (Cys-Gln) cross-link spans Cys859–Gln862. N-linked (GlcNAc...) asparagine glycans are attached at residues Asn919 and Asn1065. Cystine bridges form between Cys1217–Cys1283, Cys1326–Cys1338, and Cys1329–Cys1334.

As to quaternary structure, heterodimer of a TEP1-N chain and an TEP1-C chain non-covalently linked. Forms a complex composed of TEP1-N and TEP1-C heterodimer, LRIM1 and APL1C; the interaction stabilizes TEP1-N and TEP1-C heterodimer, prevents its binding to tissues while circulating in the hemolymph and protects the thioester bond from hydrolysis. Mature TEP1 and to a lesser extent full-length TEP1 interact with SPCLIP1; the interaction is induced by microbial infection. In the hemolymph, the full-length protein is cleaved by an unknow protease into a 75kDa N-terminal (TEP1-N) chain and an 80kDa C-terminal (TEP1-C) chain which remain non-covalently linked. The TEP1-C chain contains the thioester bond which covalently binds to the pathogen surface. Cleavage is induced by bacterial infection or aseptic wound injury. During embryonic and pupal development, the cleaved form is the predominant form. In terms of processing, N-glycosylated.

It is found in the secreted. In terms of biological role, plays an essential role in the innate immune response against bacteria, fungi and protozoa infection. After proteolytic cleavage, the protein C-terminus binds covalently through a thioester bond to the pathogen surface resulting in pathogen clearance either by melanization or lysis. Initiate the recruitment and activation of a cascade of proteases, mostly of CLIP-domain serine proteases, which leads to the proteolytic cleavage of the prophenoloxidase (PPO) into active phenoloxidase (PO), the rate-limiting enzyme in melanin biosynthesis. In response to parasite P.berghei-mediated infection, binds to and mediates killing of ookinetes, as they egress from midgut epithelial cells into the basal labyrinth, by both lysis and melanization. During bacterial infection, binds to both Gram-positive and Gram-negative bacteria but only promotes phagocytosis of Gram-negative bacteria. Promotes the accumulation of SPCLIP1 onto the surface of P.berghei ookinetes and bacterium E.coli which leads to the melanization of the pathogen. Recruits CLIPA2 to bacteria surface. In response to bacterial infection, required for periostial hemocyte aggregation, but not for the aggregation of sessile hemocytes in non-periostial regions. During the late stage of fungus B.bassiana-mediated infection, required for the initiation of hyphae melanization by binding to the surface of hyphae and recruiting prophenoloxidase PPO to them. Plays a role in male fertility by binding to defective sperm cells and promoting their removal during spermatogenesis. Functionally, binds to and mediates killing of parasite P.bergei ookinetes by lysis and melanization. Binds covalently through a thioester bond to the pathogen surface resulting in pathogen clearance. The polypeptide is Thioester-containing protein 1 allele R1 (Anopheles gambiae (African malaria mosquito)).